Here is a 297-residue protein sequence, read N- to C-terminus: Large ribosomal subunit protein uL18 (297 aa).

Gly-2 bears the N-acetylglycine mark. N6-acetyllysine occurs at positions 5 and 48. Position 185 is a phosphoserine (Ser-185). The residue at position 220 (Lys-220) is an N6-acetyllysine; alternate. Residue Lys-220 forms a Glycyl lysine isopeptide (Lys-Gly) (interchain with G-Cter in SUMO1); alternate linkage. Residue Lys-220 forms a Glycyl lysine isopeptide (Lys-Gly) (interchain with G-Cter in SUMO2); alternate linkage. A Phosphothreonine modification is found at Thr-232. The tract at residues 253–297 is disordered; it reads YEKKPKKEVKKKRWNRPKMSLAQKKDRVAQKKASFLRAQERAAES. Residues 258-268 are compositionally biased toward basic residues; that stretch reads KKEVKKKRWNR. Ser-272 carries the post-translational modification Phosphoserine.

Belongs to the universal ribosomal protein uL18 family. In terms of assembly, component of the large ribosomal subunit (LSU). Part of the 5S RNP complex, which is a LSU subcomplex composed of the 5S RNA, RPL5 and RPL11. Component of a hexameric 5S RNP precursor complex, composed of 5S RNA, RRS1, RPF2/BXDC1, RPL5, RPL11 and HEATR3; this complex acts as a precursor for ribosome assembly. Interacts with isoform 1 of NVL in an ATP-dependent manner. Interacts with RRP1B. Interacts with IPO5, IPO7 and KPNB1; these interactions may be involved in RPL5 nuclear import for the assembly of ribosomal subunits.

Its subcellular location is the cytoplasm. It localises to the nucleus. The protein localises to the nucleolus. Component of the ribosome, a large ribonucleoprotein complex responsible for the synthesis of proteins in the cell. The small ribosomal subunit (SSU) binds messenger RNAs (mRNAs) and translates the encoded message by selecting cognate aminoacyl-transfer RNA (tRNA) molecules. The large subunit (LSU) contains the ribosomal catalytic site termed the peptidyl transferase center (PTC), which catalyzes the formation of peptide bonds, thereby polymerizing the amino acids delivered by tRNAs into a polypeptide chain. The nascent polypeptides leave the ribosome through a tunnel in the LSU and interact with protein factors that function in enzymatic processing, targeting, and the membrane insertion of nascent chains at the exit of the ribosomal tunnel. As part of the 5S RNP/5S ribonucleoprotein particle it is an essential component of the LSU, required for its formation and the maturation of rRNAs. It also couples ribosome biogenesis to p53/TP53 activation. As part of the 5S RNP it accumulates in the nucleoplasm and inhibits MDM2, when ribosome biogenesis is perturbed, mediating the stabilization and the activation of TP53. This Homo sapiens (Human) protein is Large ribosomal subunit protein uL18 (RPL5).